We begin with the raw amino-acid sequence, 558 residues long: SPATS2-like protein (558 aa).

At Ala-2 the chain carries N-acetylalanine. Residues 63-79 show a composition bias toward basic residues; sequence GKKKNNKRKRSKSKQHQ. Disordered stretches follow at residues 63–134 and 157–201; these read GKKK…EKKI and KLSL…KSNT. The span at 80–92 shows a compositional bias: basic and acidic residues; sequence GNKDAKDKVERPE. Ser-120 carries the post-translational modification Phosphoserine. The stretch at 271 to 344 forms a coiled coil; sequence LMAEMDKVKE…ARFSCDIEQL (74 aa). Positions 380-525 are disordered; the sequence is TSGKQSNFSR…DTSEARPFRG (146 aa). Polar residues-rich tracts occupy residues 381 to 390, 410 to 432, and 440 to 456; these read SGKQSNFSRK, SLPSTADPSHQTMPANKQNGSSN, and QYHNNRLNGPAKSQGSG. A Phosphoserine modification is found at Ser-455. The span at 469-485 shows a compositional bias: basic residues; the sequence is HEHRRQPHNGFRPKNKG. The span at 513–522 shows a compositional bias: basic and acidic residues; the sequence is HAADTSEARP.

It belongs to the SPATS2 family.

It is found in the cytoplasm. The protein localises to the nucleus. The protein resides in the nucleolus. The polypeptide is SPATS2-like protein (SPATS2L) (Homo sapiens (Human)).